We begin with the raw amino-acid sequence, 44 residues long: Photosystem I reaction center subunit IX (44 aa).

The chain crosses the membrane as a helical span at residues 7 to 27; the sequence is YLSVAPVASTLWFVALAGLLI.

It belongs to the PsaJ family.

It localises to the plastid. The protein localises to the chloroplast thylakoid membrane. Its function is as follows. May help in the organization of the PsaE and PsaF subunits. In Cicer arietinum (Chickpea), this protein is Photosystem I reaction center subunit IX.